Reading from the N-terminus, the 51-residue chain is Large ribosomal subunit protein eL39 (51 aa).

It belongs to the eukaryotic ribosomal protein eL39 family.

The protein is Large ribosomal subunit protein eL39 (rpl39e) of Pyrobaculum aerophilum (strain ATCC 51768 / DSM 7523 / JCM 9630 / CIP 104966 / NBRC 100827 / IM2).